A 222-amino-acid chain; its full sequence is Protein THYLAKOID ASSEMBLY 8, chloroplastic (222 aa).

A chloroplast-targeting transit peptide spans 1–32 (MALSLSQTRPPSLSHSHTLSVIVPKRTFVSIR). PPR repeat units lie at residues 115 to 149 (DLVLYADIVNALTRNKEFDEIDRLIGEIDGIDQRS) and 150 to 184 (DDKALAKLIRAVVGAERRESVVRVYTLMRESGWGS).

Belongs to the PPR family. P subfamily.

The protein localises to the plastid. The protein resides in the chloroplast thylakoid membrane. Its function is as follows. Essential protein required during embryogenesis. Mediates group II organellar RNA introns splicing (e.g. ycf3-2 and trnA). Binds weakly to specific RNA. Promotes the biogenesis of chloroplast thylakoid membranes. In Arabidopsis thaliana (Mouse-ear cress), this protein is Protein THYLAKOID ASSEMBLY 8, chloroplastic.